The sequence spans 345 residues: Tryptophan--tRNA ligase (345 aa).

ATP contacts are provided by residues 12–14 and 20–21; these read RPT and GH. The short motif at 13–21 is the 'HIGH' region element; sequence PTGKLHLGH. Asp-144 serves as a coordination point for L-tryptophan. ATP-binding positions include 156–158, Leu-194, and 202–206; these read GKD and KMSKS. The 'KMSKS' region signature appears at 202–206; the sequence is KMSKS.

This sequence belongs to the class-I aminoacyl-tRNA synthetase family. In terms of assembly, homodimer.

It is found in the cytoplasm. It catalyses the reaction tRNA(Trp) + L-tryptophan + ATP = L-tryptophyl-tRNA(Trp) + AMP + diphosphate + H(+). Functionally, catalyzes the attachment of tryptophan to tRNA(Trp). This Chlamydia caviae (strain ATCC VR-813 / DSM 19441 / 03DC25 / GPIC) (Chlamydophila caviae) protein is Tryptophan--tRNA ligase.